The sequence spans 467 residues: Asparagine--tRNA ligase (467 aa).

Belongs to the class-II aminoacyl-tRNA synthetase family. In terms of assembly, homodimer.

It localises to the cytoplasm. The catalysed reaction is tRNA(Asn) + L-asparagine + ATP = L-asparaginyl-tRNA(Asn) + AMP + diphosphate + H(+). The sequence is that of Asparagine--tRNA ligase from Legionella pneumophila (strain Corby).